The primary structure comprises 592 residues: MNNGRIVRINGPLVVADNMKNAQMYEVVEVGEPRLIGEITRIEGDRAFIQVYEDTSGIKPNEPVYRTGAPLSIELGPGLIGKIFDGLQRPLDSIKELTKSPFIARGIKVPSVDRKTKWHFIPKVKKGDKIEGGDIIGIVNETPLVEHRILVPPYVHGTLKEIVAEGDYTVEDPIAVVDMNGDEVPIKLMQRWPVRIPRPFREKLEPTEPLLTGTRVLDTIFPIAKGGTAAIPGPFGSGKTVTLQSLAKWSAAKIVIYVGCGERGNEMTDELRQFPSLKDPWTGRPLLERTILVANTSNMPVAAREASIYVGITMAEYFRDQGYDTLLVADSTSRWAEALRDLGGRMEEMPAEEGFPSYLPSRLAEYYERAGRVKTVGKPERFGSVTVASAVSPPGGDFTEPVTSQTLRFVKVFWPLDVSLAQARHYPAINWLQGFSAYVDLVANWWNTNVDPKWREMRDMMVRTLIREDELRQIVRLVGPESLAEKDKLVLETARLIKEAFLKQNAYDDIDAFSSPQKQARVMRLIYLFNTHASRLVERGIPTKKIVDSMGQLLPEIIRSKAAIKNDELNKYDELERKLISVFENLEKEAGT.

233–240 provides a ligand contact to ATP; the sequence is GPFGSGKT.

It belongs to the ATPase alpha/beta chains family. As to quaternary structure, has multiple subunits with at least A(3), B(3), C, D, E, F, H, I and proteolipid K(x).

It is found in the cell membrane. The enzyme catalyses ATP + H2O + 4 H(+)(in) = ADP + phosphate + 5 H(+)(out). Component of the A-type ATP synthase that produces ATP from ADP in the presence of a proton gradient across the membrane. The A chain is the catalytic subunit. This Saccharolobus islandicus (strain L.S.2.15 / Lassen #1) (Sulfolobus islandicus) protein is A-type ATP synthase subunit A.